Here is a 306-residue protein sequence, read N- to C-terminus: Elongation factor Ts (306 aa).

Residues 80 to 83 (TDFV) are involved in Mg(2+) ion dislocation from EF-Tu.

This sequence belongs to the EF-Ts family.

Its subcellular location is the cytoplasm. Functionally, associates with the EF-Tu.GDP complex and induces the exchange of GDP to GTP. It remains bound to the aminoacyl-tRNA.EF-Tu.GTP complex up to the GTP hydrolysis stage on the ribosome. This chain is Elongation factor Ts, found in Leptothrix cholodnii (strain ATCC 51168 / LMG 8142 / SP-6) (Leptothrix discophora (strain SP-6)).